The primary structure comprises 1574 residues: DNA-directed RNA polymerase subunit beta' (1574 aa).

Zn(2+)-binding residues include C64, C66, C79, and C82. Residues D590, D592, and D594 each contribute to the Mg(2+) site. Positions 928, 1002, 1009, and 1012 each coordinate Zn(2+).

This sequence belongs to the RNA polymerase beta' chain family. As to quaternary structure, the RNAP catalytic core consists of 2 alpha, 1 beta, 1 beta' and 1 omega subunit. When a sigma factor is associated with the core the holoenzyme is formed, which can initiate transcription. Mg(2+) is required as a cofactor. Requires Zn(2+) as cofactor.

It catalyses the reaction RNA(n) + a ribonucleoside 5'-triphosphate = RNA(n+1) + diphosphate. In terms of biological role, DNA-dependent RNA polymerase catalyzes the transcription of DNA into RNA using the four ribonucleoside triphosphates as substrates. In Aquifex aeolicus (strain VF5), this protein is DNA-directed RNA polymerase subunit beta'.